Reading from the N-terminus, the 85-residue chain is Neurotoxin beta-KTx 17 (85 aa).

The N-terminal stretch at 1-20 (MKQYIFFLALIVLVSTFAEA) is a signal peptide. The propeptide occupies 21–37 (GKKTEILDKVKKVFSKG). The BetaSPN-type CS-alpha/beta domain occupies 49–85 (ELGCPFIEKWCEDHCESKKQVGKCENFDCSCVKLGGK). 3 disulfides stabilise this stretch: C52/C72, C59/C77, and C63/C79.

It belongs to the long chain scorpion toxin family. Class 2 subfamily. Expressed by the venom gland.

Its subcellular location is the secreted. Has a very weak effect to block voltage-gated potassium channel Kv1.1/KCNA1. This Lychas mucronatus (Chinese swimming scorpion) protein is Neurotoxin beta-KTx 17.